The primary structure comprises 230 residues: 2,3-bisphosphoglycerate-dependent phosphoglycerate mutase (230 aa).

Residues 8 to 15 (RHGQSIWN), 21 to 22 (TG), arginine 60, 87 to 90 (ERHY), lysine 98, and 114 to 115 (RR) each bind substrate. Histidine 9 serves as the catalytic Tele-phosphohistidine intermediate. Glutamate 87 functions as the Proton donor/acceptor in the catalytic mechanism. The disordered stretch occupies residues 117–143 (YDTPPPALDAEDERHPRHDPRYAGLDP). The segment covering 128–137 (DERHPRHDPR) has biased composition (basic and acidic residues). Position 183 to 184 (183 to 184 (GN)) interacts with substrate.

Belongs to the phosphoglycerate mutase family. BPG-dependent PGAM subfamily. In terms of assembly, homodimer.

The catalysed reaction is (2R)-2-phosphoglycerate = (2R)-3-phosphoglycerate. The protein operates within carbohydrate degradation; glycolysis; pyruvate from D-glyceraldehyde 3-phosphate: step 3/5. Its function is as follows. Catalyzes the interconversion of 2-phosphoglycerate and 3-phosphoglycerate. This is 2,3-bisphosphoglycerate-dependent phosphoglycerate mutase from Halorhodospira halophila (strain DSM 244 / SL1) (Ectothiorhodospira halophila (strain DSM 244 / SL1)).